The following is a 262-amino-acid chain: MEAIPLVRSSLSGTLLVVVKLSALLIQNRAHLYNFLLLKIFLFNHWLLGLTQEAQGFHPPSKIAGCPVGRVLWAGLTLLEVPVCLALRVPRLVWAGLLGCARALGLGPKWLGAWEQLGLSAATWTDLFLSCLHSLMLAALLLLLLVWRLYQKAQCCSLGRLPRKALLQNRVVRRSLALLKSLYWWVESTAALTSWHLAYLITWTTCLASHLLQAAFEHTAQLAQAQEAEPQKALGLSSETPPPGPPAPGARPVLPEPGTPGE.

The next 5 membrane-spanning stretches (helical) occupy residues 6 to 26 (LVRS…ALLI), 30 to 50 (AHLY…LLGL), 67 to 87 (PVGR…CLAL), 92 to 112 (LVWA…KWLG), and 127 to 147 (LFLS…LLVW). The segment at 226–262 (QEAEPQKALGLSSETPPPGPPAPGARPVLPEPGTPGE) is disordered. Residues 240 to 262 (TPPPGPPAPGARPVLPEPGTPGE) are compositionally biased toward pro residues.

Its subcellular location is the membrane. This chain is Transmembrane protein 270, found in Bos taurus (Bovine).